The following is an 808-amino-acid chain: Phosphoinositide phosphatase SAC2 (808 aa).

One can recognise an SAC domain in the interval 158–551 (LCTVDLTKDF…GDTLALQYGG (394 aa)). Residues 429–476 (FQNQNPSTLENDDGECSTYDPPSKDETAPNLVVENGNDSKDAKEDQQK) form a disordered region. Over residues 465–476 (NDSKDAKEDQQK) the composition is skewed to basic and acidic residues. Positions 487–498 (RTNCIDCLDRTN) match the Phosphatase catalytic core motif.

As to quaternary structure, component of the PI(3,5)P2 regulatory complex at least composed of ATG18, SAC/FIG4, FAB1 and VAC14. Requires Mg(2+) as cofactor. As to expression, ubiquitous with a higher level of expression in young seedlings than in other tissues.

It localises to the vacuole membrane. The enzyme catalyses a 1,2-diacyl-sn-glycero-3-phospho-(1D-myo-inositol-3,5-bisphosphate) + H2O = a 1,2-diacyl-sn-glycero-3-phospho-(1D-myo-inositol-3-phosphate) + phosphate. Its function is as follows. The PI(3,5)P2 regulatory complex regulates both the synthesis and turnover of phosphatidylinositol 3,5-bisphosphate (PtdIns(3,5)P2). The chain is Phosphoinositide phosphatase SAC2 (SAC2) from Arabidopsis thaliana (Mouse-ear cress).